A 433-amino-acid chain; its full sequence is Protein translocase subunit SecY (433 aa).

The next 10 helical transmembrane spans lie at 17–37, 71–91, 117–137, 141–161, 184–204, 212–232, 268–288, 309–329, 366–386, and 388–408; these read IIFT…PIAG, IFAL…LMSV, LTVL…ESIV, GPVV…TLVV, LIIF…MFEL, PLVA…IIFF, GVIP…LANF, IYIL…TAIV, LTVV…LLMN, and YVIS…VVLD.

It belongs to the SecY/SEC61-alpha family. In terms of assembly, component of the Sec protein translocase complex. Heterotrimer consisting of SecY, SecE and SecG subunits. The heterotrimers can form oligomers, although 1 heterotrimer is thought to be able to translocate proteins. Interacts with the ribosome. Interacts with SecDF, and other proteins may be involved. Interacts with SecA.

It localises to the cell inner membrane. Its function is as follows. The central subunit of the protein translocation channel SecYEG. Consists of two halves formed by TMs 1-5 and 6-10. These two domains form a lateral gate at the front which open onto the bilayer between TMs 2 and 7, and are clamped together by SecE at the back. The channel is closed by both a pore ring composed of hydrophobic SecY resides and a short helix (helix 2A) on the extracellular side of the membrane which forms a plug. The plug probably moves laterally to allow the channel to open. The ring and the pore may move independently. The chain is Protein translocase subunit SecY from Rickettsia bellii (strain RML369-C).